The sequence spans 346 residues: 3-dehydroquinate synthase (346 aa).

Residues 62-67, 96-100, 120-121, Lys133, and Lys142 contribute to the NAD(+) site; these read DGEQYK, GVISD, and TT. 3 residues coordinate Zn(2+): Glu175, His234, and His251.

Belongs to the sugar phosphate cyclases superfamily. Dehydroquinate synthase family. Co(2+) serves as cofactor. The cofactor is Zn(2+). Requires NAD(+) as cofactor.

It localises to the cytoplasm. The enzyme catalyses 7-phospho-2-dehydro-3-deoxy-D-arabino-heptonate = 3-dehydroquinate + phosphate. It participates in metabolic intermediate biosynthesis; chorismate biosynthesis; chorismate from D-erythrose 4-phosphate and phosphoenolpyruvate: step 2/7. In terms of biological role, catalyzes the conversion of 3-deoxy-D-arabino-heptulosonate 7-phosphate (DAHP) to dehydroquinate (DHQ). This is 3-dehydroquinate synthase from Campylobacter fetus subsp. fetus (strain 82-40).